Reading from the N-terminus, the 156-residue chain is Small ribosomal subunit protein uS7 (156 aa).

This sequence belongs to the universal ribosomal protein uS7 family. Part of the 30S ribosomal subunit. Contacts proteins S9 and S11.

Functionally, one of the primary rRNA binding proteins, it binds directly to 16S rRNA where it nucleates assembly of the head domain of the 30S subunit. Is located at the subunit interface close to the decoding center, probably blocks exit of the E-site tRNA. The polypeptide is Small ribosomal subunit protein uS7 (Synechococcus sp. (strain RCC307)).